The following is a 522-amino-acid chain: Glycerol kinase (522 aa).

T15 contributes to the substrate binding site. R19 serves as a coordination point for ATP. Residues 89–90 (RE), Y143, and 255–256 (DQ) contribute to the substrate site. ATP contacts are provided by residues T276, G321, and 430-434 (GATAN).

This sequence belongs to the FGGY kinase family. Highly expressed in germinating seeds and senescent leaves, and at lower levels in roots, leaves, flowers and siliques.

Its subcellular location is the cytoplasm. It localises to the cytosol. It carries out the reaction glycerol + ATP = sn-glycerol 3-phosphate + ADP + H(+). It functions in the pathway polyol metabolism; glycerol degradation via glycerol kinase pathway; sn-glycerol 3-phosphate from glycerol: step 1/1. Functionally, key enzyme in the regulation of glycerol uptake and metabolism. Required for resistance to nonhost Pseudomonas bacteria and to the pathogenic fungus B.cinerea. The protein is Glycerol kinase (GLPK) of Arabidopsis thaliana (Mouse-ear cress).